Consider the following 297-residue polypeptide: MNMLLEINDLNSYDIEFIFDTAIQHFNNSNVSNNSLYGKTIVNLFFESSTRTLSSFEISAKSLGARTVTINVSTSSMNKGESIIDTVLNINAMNPDLIIIRSQYSQFIKEISKYLPNCHIINAGDGHHEHPTQALIDYCTIRYIKGKIHNLNISICGDILHSRVARSNIRLLSRYGANISIVAPPTLICNLKGVSHIHHNFVEGISDSDVIMLLRLQKERMTNFTISSEEEYAYLYMLNSENLSYARSDVIVMHPGPTNKGVEISHYVAEKKSIILLQVKMGVAVRKAILEYLLCHN.

Residues R51 and T52 each coordinate carbamoyl phosphate. K79 lines the L-aspartate pocket. Carbamoyl phosphate-binding residues include R101, H130, and Q133. L-aspartate contacts are provided by R163 and R215. G256 and P257 together coordinate carbamoyl phosphate.

The protein belongs to the aspartate/ornithine carbamoyltransferase superfamily. ATCase family. As to quaternary structure, heterododecamer (2C3:3R2) of six catalytic PyrB chains organized as two trimers (C3), and six regulatory PyrI chains organized as three dimers (R2).

The enzyme catalyses carbamoyl phosphate + L-aspartate = N-carbamoyl-L-aspartate + phosphate + H(+). It functions in the pathway pyrimidine metabolism; UMP biosynthesis via de novo pathway; (S)-dihydroorotate from bicarbonate: step 2/3. Catalyzes the condensation of carbamoyl phosphate and aspartate to form carbamoyl aspartate and inorganic phosphate, the committed step in the de novo pyrimidine nucleotide biosynthesis pathway. The sequence is that of Aspartate carbamoyltransferase catalytic subunit from Ehrlichia ruminantium (strain Gardel).